A 306-amino-acid polypeptide reads, in one-letter code: Non-specific ribonucleoside hydrolase RihC (306 aa).

Residue H235 is part of the active site.

It belongs to the IUNH family. RihC subfamily.

Hydrolyzes both purine and pyrimidine ribonucleosides with a broad-substrate specificity. In Salmonella schwarzengrund (strain CVM19633), this protein is Non-specific ribonucleoside hydrolase RihC.